Reading from the N-terminus, the 990-residue chain is Chondroitin sulfate ABC exolyase (990 aa).

The active-site Proton acceptor is His453. The active-site Proton donor is Tyr460.

The protein belongs to the polysaccharide lyase 8 family.

The enzyme catalyses Exolytic removal of Delta(4)-unsaturated disaccharide residues from the non-reducing ends of both polymeric chondroitin/dermatan sulfates and their oligosaccharide fragments.. With respect to regulation, inhibited by Zn(2+), whereas Ni(2+), Fe(2+), and Cu(2+) have little or no effect on activity. In terms of biological role, broad-specificity glycosaminoglycan lyase, which acts in an exolytic fashion, and preferentially degrades the tetra- and hexasaccharide derivatives of chondroitin sulfate and dermatan sulfate produced by the chondroitin sulfate ABC endolyase, to yield the respective disaccharides. To a lesser extent, is also able to split off disaccharide residues directly from polymeric chondroitin 4- and 6-sulfate, dermatan sulfate, chondroitin, and hyaluronan. Is not active against keratan sulfate, heparan sulfate, and heparin. This chain is Chondroitin sulfate ABC exolyase (ChABCII), found in Proteus vulgaris.